The primary structure comprises 782 residues: E3 UFM1-protein ligase 1 homolog (782 aa).

The tract at residues 405-478 (VSTQELEDDG…TRGGGGASKK (74 aa)) is disordered.

The protein belongs to the UFL1 family.

E3 UFM1-protein ligase that mediates ufmylation of target proteins. This chain is E3 UFM1-protein ligase 1 homolog, found in Drosophila simulans (Fruit fly).